Here is a 707-residue protein sequence, read N- to C-terminus: Elongation factor G (707 aa).

In terms of domain architecture, tr-type G spans 8–297 (ERVRNIGIAA…AVLDYLPSPL (290 aa)). GTP contacts are provided by residues 17–24 (AHIDAGKT), 96–100 (DTPGH), and 150–153 (NKMD).

The protein belongs to the TRAFAC class translation factor GTPase superfamily. Classic translation factor GTPase family. EF-G/EF-2 subfamily.

It localises to the cytoplasm. Functionally, catalyzes the GTP-dependent ribosomal translocation step during translation elongation. During this step, the ribosome changes from the pre-translocational (PRE) to the post-translocational (POST) state as the newly formed A-site-bound peptidyl-tRNA and P-site-bound deacylated tRNA move to the P and E sites, respectively. Catalyzes the coordinated movement of the two tRNA molecules, the mRNA and conformational changes in the ribosome. This chain is Elongation factor G, found in Gloeobacter violaceus (strain ATCC 29082 / PCC 7421).